The chain runs to 273 residues: MNAIFVANKPAGMSSNHFLGRLKRKYGVKKAGFSGTLDPFASGCLIVAFGSYTKFFRFLDKSPKVYEATIWLGASSPSMDNENITEISNVKELNLEKLEAIRGELIGKISYIPPKFSAKHVNGTRAYKLARSGEEFELKPEIMEIYESEILNYSHPFLTLRLSVSEGSYIRSYAEIFGQKVGYNVTLSSLKRVSEGKFRYENEKFLNICNFLNIEQNTYFGDINNILDGKELKINDFETQTQGIYLLNYDKFMSVIQIMDDTINYTLNKVEKC.

Aspartate 38 acts as the Nucleophile in catalysis.

It belongs to the pseudouridine synthase TruB family. Type 1 subfamily.

It catalyses the reaction uridine(55) in tRNA = pseudouridine(55) in tRNA. Functionally, responsible for synthesis of pseudouridine from uracil-55 in the psi GC loop of transfer RNAs. This chain is tRNA pseudouridine synthase B, found in Campylobacter concisus (strain 13826).